Here is a 345-residue protein sequence, read N- to C-terminus: Phosphoribosylformylglycinamidine cyclo-ligase (345 aa).

It belongs to the AIR synthase family.

The protein localises to the cytoplasm. It carries out the reaction 2-formamido-N(1)-(5-O-phospho-beta-D-ribosyl)acetamidine + ATP = 5-amino-1-(5-phospho-beta-D-ribosyl)imidazole + ADP + phosphate + H(+). Its pathway is purine metabolism; IMP biosynthesis via de novo pathway; 5-amino-1-(5-phospho-D-ribosyl)imidazole from N(2)-formyl-N(1)-(5-phospho-D-ribosyl)glycinamide: step 2/2. This is Phosphoribosylformylglycinamidine cyclo-ligase from Prochlorococcus marinus (strain MIT 9313).